The chain runs to 87 residues: U3-theraphotoxin-Hhn1a 8 (87 aa).

An N-terminal signal peptide occupies residues Met-1–Ala-24. Positions Ser-25–Arg-52 are excised as a propeptide. Intrachain disulfides connect Cys-54–Cys-67, Cys-61–Cys-72, and Cys-66–Cys-79.

It belongs to the neurotoxin 10 (Hwtx-1) family. 51 (Hntx-8) subfamily. Hntx-8 sub-subfamily. As to expression, expressed by the venom gland.

It is found in the secreted. Ion channel inhibitor. This Cyriopagopus hainanus (Chinese bird spider) protein is U3-theraphotoxin-Hhn1a 8.